We begin with the raw amino-acid sequence, 229 residues long: Flagellar L-ring protein (229 aa).

Positions 1 to 20 are cleaved as a signal peptide; that stretch reads MLKTVLRLPVCAALLALAAG. A lipid anchor (N-palmitoyl cysteine) is attached at Cys-21. Residue Cys-21 is the site of S-diacylglycerol cysteine attachment.

Belongs to the FlgH family. In terms of assembly, the basal body constitutes a major portion of the flagellar organelle and consists of four rings (L,P,S, and M) mounted on a central rod.

It is found in the cell outer membrane. It localises to the bacterial flagellum basal body. In terms of biological role, assembles around the rod to form the L-ring and probably protects the motor/basal body from shearing forces during rotation. The protein is Flagellar L-ring protein of Bordetella pertussis (strain Tohama I / ATCC BAA-589 / NCTC 13251).